The following is an 831-amino-acid chain: Probable basic-leucine zipper transcription factor P (831 aa).

Disordered stretches follow at residues 1–33 (MNHRIEDITSNPSSPSPNSPFSSPQVSLQPSII) and 54–166 (NITS…IASR). A compositionally biased stretch (low complexity) spans 54–85 (NITSSPSTSSSPPISTTTTTTTTTTTTATAKK). Residues 87–96 (NSKEKKKTTN) are compositionally biased toward basic and acidic residues. A compositionally biased stretch (low complexity) spans 97–129 (KDNNNNNNNNNSNNQQQQQQQQQQQQQQQQQQQ). The stretch at 101–141 (NNNNNNNSNNQQQQQQQQQQQQQQQQQQQYEEEDDDEEDEG) forms a coiled coil. Positions 130–143 (YEEEDDDEEDEGGD) are enriched in acidic residues. The segment covering 144–154 (DNTKVGKGEKM) has biased composition (basic and acidic residues). One can recognise a bZIP domain in the interval 151–214 (GEKMKARRTN…LELLKFSQEV (64 aa)). Positions 153–173 (KMKARRTNQNIASRNYRQRKK) are basic motif. A leucine-zipper region spans residues 176–183 (IKEMEDKI). Composition is skewed to low complexity over residues 469 to 484 (SSSSSSSSSSMSSSTS) and 497 to 510 (SSSNSSPSSLSASS). Disordered regions lie at residues 469–510 (SSSS…SASS), 658–697 (QQQAAQQQSPIQTQLSPPQHITPQHTPQQHIQQQQQHQNY), 715–771 (DATN…NTNK), and 787–810 (SLFSHQHQQQNSQSPTLPPSQNDS). A coiled-coil region spans residues 601 to 664 (AQQHAQQQAQ…QAAQQQAAQQ (64 aa)). Composition is skewed to low complexity over residues 674 to 695 (PPQHITPQHTPQQHIQQQQQHQ), 720 to 750 (NNNNNNNNNNNNNNNNNNNNNNNNNNNNNNN), and 787 to 800 (SLFSHQHQQQNSQS).

The protein belongs to the bZIP family.

Its subcellular location is the nucleus. Probable transcriptional regulator. This is Probable basic-leucine zipper transcription factor P (bzpP) from Dictyostelium discoideum (Social amoeba).